The primary structure comprises 396 residues: Serine/threonine-protein kinase GRIK1 (396 aa).

A disordered region spans residues 22 to 65 (ERSRHSPNPYDDDTYSHDSGETSNPGGDDEEGEEEEEVEELSRS). Positions 48–60 (GDDEEGEEEEEVE) are enriched in acidic residues. Residues 108-369 (FVRERKIGSG…LKAVAEHPWI (262 aa)) form the Protein kinase domain. ATP is bound by residues 114 to 122 (IGSGSYGKV) and Lys-137. Phosphothreonine; by autocatalysis is present on Thr-154. Asp-239 functions as the Proton acceptor in the catalytic mechanism. The residue at position 261 (Ser-261) is a Phosphoserine; by KIN10.

The protein belongs to the protein kinase superfamily. Ser/Thr protein kinase family. As to quaternary structure, associates with the SNF1-related protein kinase (SnRK) complex. Interacts with AL1, a geminivirus (TGMV) protein essential for viral replication. In terms of tissue distribution, expressed in shoot apical meristem, leaf primordium and emerging petiole (at protein level).

The protein localises to the cytoplasm. The protein resides in the nucleus. It carries out the reaction L-seryl-[protein] + ATP = O-phospho-L-seryl-[protein] + ADP + H(+). It catalyses the reaction L-threonyl-[protein] + ATP = O-phospho-L-threonyl-[protein] + ADP + H(+). Activated when autophosphorylated at Thr-154 and inactivated when phosphorylated at Ser-261 by SnRK1.1/KIN10. Activates SnRK1.1/KIN10 and SnRK1.2/KIN11 by phosphorylation of their activation-loop 'Thr-198' and 'Thr-176', respectively. Required for the regulation by SnRK1 kinases of the transcription of a large set of genes, the modification the activity of metabolic enzymes, and the control of various nutrient-responsive cellular developmental processes. The protein is Serine/threonine-protein kinase GRIK1 (GRIK1) of Arabidopsis thaliana (Mouse-ear cress).